The chain runs to 414 residues: MEAVRCRRGRENNKSPERIIRSLNHHQHDEELEEEVKTKKPIFRRVQVVYYLTRNGHLEHPHFIEVISPVNQPLRLRDVMNRLTILRGKCMTSQYAWSCKRSYRNGFVWNDLAENDVIYPSDCAEYVLKGSEITDKFQEVHVNRPLSGSIQEAPKSRLLRSKLKPQNRTASFDDAELYVGEEEEEEDGEYELYEEKTSYTSSTTPQSRCSRGVSTETMESTEQKPNLTKTEQDLQVRSDSSDLTRSNPVVKPRRHEVSTRVEDGDPVEPGSGRGSMWLQMISCGHIATKYYAPSVMNPRQKEENLRKGVLCKNIVKKTVVDDEREMIRFMSENPRFGNPQAEEKEYFSGSIVESVSQERVTAEPSLRRSNSFNEERSKIVEMAKETKKKEERSMAKVKCIPRTCLMSSSKQIKK.

Residues 44–135 (RRVQVVYYLT…YVLKGSEITD (92 aa)) are DIX-like oligomerization domain. Residues 171-273 (SFDDAELYVG…GDPVEPGSGR (103 aa)) are disordered. The span at 173–192 (DDAELYVGEEEEEEDGEYEL) shows a compositional bias: acidic residues. Residues 205–229 (PQSRCSRGVSTETMESTEQKPNLTK) are compositionally biased toward polar residues. A compositionally biased stretch (basic and acidic residues) spans 230–242 (TEQDLQVRSDSSD). Positions 283 to 284 (CG) match the Association to cell membranes motif.

This sequence belongs to the SOSEKI family. Homodimer. Forms long polymer filaments with other SOKs proteins polymers (e.g. SOK1, SOK2, SOK3 and SOK4) crucial for polar localization and biological activity. Binds to ANGUSTIFOLIA (AN). Expressed during embryogenesis and in roots.

The protein localises to the cell membrane. Functionally, part of a three-gene cluster containing FLC, UFC and DFC, which is coordinately regulated in response to vernalization. Also regulated by FLX. SOSEKI proteins (SOK1-5) locally interpret global polarity cues and can influence cell division orientation to coordinate cell polarization relative to body axes, probably by guiding ANGUSTIFOLIA (AN) polarized localization. The sequence is that of Protein SOSEKI 2 from Arabidopsis thaliana (Mouse-ear cress).